The chain runs to 461 residues: MSRQKSQTSKGHGASKGKEREQRTLIRFKTTLMNTLMDVLRHRPGWVEVKDEGEWDFYWCDVSWLRENFDHTYMDEHVRISHFRNHYELTRKNYMVKNLKRFRKQLEREAGKTEAAKCDFFPKTFEMPCEYHLFVEEFRKNPGITWIMKPVARSQGKGIFLFRRLKDIMDWRKGTAGKKVTSVETQATRANVNPSGSHDTRSSDDQKDDIPVENYVAQRYVENPYLIGGRKFDLRVYVLVMSYIPLRAWLYRDGFARFSNTRFTLNSIDDHYVHLTNVAVQKTSPDYHPKKGCKWTLQRFRQYLASKHGPKAVETLFSDMDNIFIKSLQSVQKVIISDKHCFELYGYDILIDQDLKPWLLEVNASPSLTASSQEDYELKTCLLEDTLHVVDMEARLTGKEKRVGGFDLMWNDGPVSREEGPCDLSGMGNFVTNTHLGCINDRKEQLRQLFRSLQVQKKASS.

Residues 1–10 (MSRQKSQTSK) show a composition bias toward polar residues. Positions 1–20 (MSRQKSQTSKGHGASKGKER) are disordered. A TTL domain is found at 22–402 (QRTLIRFKTT…EARLTGKEKR (381 aa)). ATP is bound by residues lysine 149 and 155–156 (QG). Residue glutamine 155 participates in a protein binding. Residues 186–197 (QATRANVNPSGS) are compositionally biased toward polar residues. Residues 186-208 (QATRANVNPSGSHDTRSSDDQKD) are disordered. Residues 198-208 (HDTRSSDDQKD) are compositionally biased toward basic and acidic residues. Residues 218–221 (QRYV) and 231–233 (KFD) each bind ATP. Arginine 257 provides a ligand contact to L-glutamate. Position 276–277 (276–277 (TN)) interacts with ATP. Lysine 294 contacts L-glutamate. Positions 348, 361, and 363 each coordinate Mg(2+). An L-glutamate-binding site is contributed by lysine 379.

Belongs to the tubulin--tyrosine ligase family. The cofactor is Mg(2+).

The protein localises to the cytoplasm. The protein resides in the cytoskeleton. It is found in the cilium basal body. It localises to the flagellum axoneme. The enzyme catalyses (L-glutamyl)(n)-gamma-L-glutamyl-L-glutamyl-[protein] + L-glutamate + ATP = (L-glutamyl)(n+1)-gamma-L-glutamyl-L-glutamyl-[protein] + ADP + phosphate + H(+). Probable tubulin polyglutamylase that generates side chains of glutamate on the gamma-carboxyl group of specific glutamate residues within the C-terminal tail of target proteins. Similar to TTLL1, may acquire enzymatic activity only in complex with other proteins as it is most likely lacking domains important for autonomous activity. Mediates tubulin polyglutamylation which induces establishment of microtubule heterogeneity in sperm flagella, thereby playing a role in normal motile flagella axoneme structure and sperm flagella beating pattern. In Rattus norvegicus (Rat), this protein is Probable tubulin polyglutamylase TTLL9 (Ttll9).